The following is a 355-amino-acid chain: MQVEVDLPNHSYHIKIEEGCFSEAGDWVSHLWQKQMITIITDSNVEILYGESLVNQLKKQGFTVHVFSFAAGEASKTLEVANRIYGFLAKHHMTRSDGIIALGGGVVGDLAAFVASTYMRGIHFLQIPTSLTAQVDSSIGGKTGVNTSFAKNMVGTFAQPDGVLIDPVTLKTLGNRELVEGMGEVIKYGLIDDIKLWHILEEMDGTIDSILDSALAIIYHSCQVKRKHVLADQYDKGLRMHLNFGHTIGHAIEVHAGYGEIMHGEAVAIGMIQLSRVAERKNLMPRGISQDIYNMCLKFGLPVHYAEWDKDVLFDILSHDKKASGQFIKIVILPQLGSATVHQIPLEEMRDYLEK.

NAD(+) contacts are provided by residues 105 to 109 (GVVGD), 129 to 130 (TS), Lys-142, Lys-151, and 169 to 172 (TLKT). Zn(2+) contacts are provided by Glu-184, His-246, and His-263.

Belongs to the sugar phosphate cyclases superfamily. Dehydroquinate synthase family. NAD(+) serves as cofactor. It depends on Co(2+) as a cofactor. Requires Zn(2+) as cofactor.

It is found in the cytoplasm. It carries out the reaction 7-phospho-2-dehydro-3-deoxy-D-arabino-heptonate = 3-dehydroquinate + phosphate. The protein operates within metabolic intermediate biosynthesis; chorismate biosynthesis; chorismate from D-erythrose 4-phosphate and phosphoenolpyruvate: step 2/7. Catalyzes the conversion of 3-deoxy-D-arabino-heptulosonate 7-phosphate (DAHP) to dehydroquinate (DHQ). This is 3-dehydroquinate synthase from Streptococcus agalactiae serotype III (strain NEM316).